A 300-amino-acid chain; its full sequence is Cation-efflux pump FieF (300 aa).

The helical transmembrane segment at 24 to 44 (LLIKIFAWWYTGSVSILAALV) threads the bilayer. D45 and D49 together coordinate Zn(2+). 2 consecutive transmembrane segments (helical) span residues 82–102 (AALA…LTGI) and 114–134 (AGVG…LVTF). Zn(2+)-binding residues include H153 and D157. 2 consecutive transmembrane segments (helical) span residues 156-176 (SDVM…YGWH) and 178-198 (ADAL…LRMG).

It belongs to the cation diffusion facilitator (CDF) transporter (TC 2.A.4) family. FieF subfamily. In terms of assembly, homodimer.

It is found in the cell inner membrane. The enzyme catalyses Zn(2+)(in) + H(+)(out) = Zn(2+)(out) + H(+)(in). The catalysed reaction is Cd(2+)(in) + H(+)(out) = Cd(2+)(out) + H(+)(in). It catalyses the reaction Fe(2+)(in) + H(+)(out) = Fe(2+)(out) + H(+)(in). Divalent metal cation transporter which exports Zn(2+), Cd(2+) and possibly Fe(2+). May be involved in zinc and iron detoxification by efflux. In Klebsiella pneumoniae (strain 342), this protein is Cation-efflux pump FieF.